A 4158-amino-acid chain; its full sequence is MTFRATDSEFDLTNIEEYAENSALSRLNNIKAKQRVSYVTSTENESDTQILTFRHITKAQEKTRKRQQPIKLEPLPVLKVYQDHKQPEYIHEQNRFQLMTAGIIKRPVSIAKKSFATSSTQFLEHQDAVKKMQIHRPYVEVFSPSPPKLPHTGIGKRGLFGTRSSAYPKYTFHDREEVVKANIRDPLQIIKIIRENEHLGFLYMIPAVPRSSIEYDTYNLKVVSYENINKNDYYTISQRAVTHIYNEDIEFIEIDRWEQEYLYHRELTKIPIFSLFRKWKAFSVWRKNVRSKKITGCQKSLQKNLFIVNPHLRPALLKINELCYHLSFMGLCYIEKCHTYTLQEFKAAQVIRLAEVTERLGEFRNEAKYVVRRACRFALRAAGFVPDDCAFGPFEDYHKVQSSGSFINTPHELPTYGDSEKMTYTEQASKRHYCMRLTCFIRLNDYLIENTMHILTVNAVNSLLNHLTDKLKRTPSADVIQKWITEEKPEVPDKKGTLMVEKQEEDESLIPMFLTELMLTVQSLLFEPSLEDFLDGILGAVNHCQNTVLSVPNLVPDSYFDAFTSPYINNKLEGKTCGTGPSLAAVFEDDKNFHTIISQIKETIQAAFESARIYAATFEKFQIFFKENESLDLQALKLQEPDINFFSEQLEKYHKQHKDAVALRPTRNVGLLLIDTRLLREKLIPSPLRCLEVLNFMLPRQSKKKVDAIIFEAQDAEYKLEFVPTTTTEYVHSLLFLDEIQERIESLEDEGNIVTQMYKLMEQYQVPTPPEDFAVFATMKPSIVAVRNAIDKSVGDRESSIKQFCVHLGSDLEELNNEVNEVKLQAQDPQILDISADQDKIRLILNNLQSVLADLQKRAFQYKSYQKNFKVEVSKFEALEEVSAELKLKQLLWDSFSEWDKLQQEWLKSKFDCLDPEVLNGQVSKYAKFVTQLEKGLPPNSVVPQLKYKVEKMKEKLPVIIDLRNPTLKARHWAAIEQTVDATLVDAEIPLTLERLSQLHVFDFGQEIQDISGQASGEAALEAILKKVEDSWKTTEFVILPHRDSKDVFILGGTDDIQVLLDDSTINVATLASSRYLGPLKTRVDEWQKQLALFNQTLEEWLTCQRNWLYLESIFNAPDIQRQLPAEAKMFLQVDKSWKEIMRKVNRLPNALRAATQPGLLETFQNNNALLDQIQKCLEAYLESKRVIFPRFYFLSNDELLEILAQTRNPQAVQPHLRKCFDSISKLEFALMPPAEGKIPGIDGEPEKVYTNDILAMLSPEGERVSLGKGLKARGNVEEWLGKVEEAMFTSLRRLCKAAIADYQGKLRTDWVVAGHPSQVILTVSQIMWCRDLTECLETEHSNHIQALKNFEKVNFERLNALAAIVQGSLPKLHRNILTALITIDVHARDIVTELVQSKVETVESFDWQRQLRYYWDIDLDNCVARMALSQYTYGYEYLGACPRLVITPLTDRCYLCLMGALQLDLGGAPAGPAGTGKTETTKDLAKALAIQCVVFNCSDGLDYKMMGRFFSGLAQSGAWCCFDEFNRIDIEVLSVIAQQLITIRNAKAAKLSRFMFEGREIKLVMTCAAFITMNPGYAGRTELPDNLKALFRPFAMMVPNYALIAEVILYSEGFESSKILARKMTQMYKLCSEQLSQQDHYDFGMRAVKSVLVMAGSLKRENPDLNEDVVLIRALQDSNLPKFLTDDALLFSGIISDLFPGVQIPEHDYGILQSTIVDVMNRQNLQPEMCMVRKVIQFYETMLVRHGVMLVGPTGGGKTTVYRILAETLGNLQKLGIENSFYQAVKTYVLNPKSITMGELYGEVNNLTLEWKDGLMALSVRAAVNDTSEDHKWIISDGPVDALWIENMNTVLDDNKMLCLANSERIKLTPQIHMLFEVQDLRVASPATVSRCGMVFVDPEELKWMPYVKTWMKGISKKLTEETQEYILNLFQRYVDEGLHFINKKCSQAIPQVDISKVTTLCCLLESLILGKDGVNLAMEQTKLNTILCQTFVFCYLWSLGGNLTENYYDSFDTFIRTQFDDNPDARLPNSGDLWSIHMDFDTKRLDPWERIIPTFKYNRDVPFFEMLVPTTDTVRYGYLMEKLLAVKHSVLFTGITGVGKSVIAKGLLNKIQESAGYVPVYLNFSAQTSSARTQEIIESKLERKRKNILGAPGNKRIVIFVDDLNMPRLDRYGSQPPIELLRQYQDFGGFYDRNKLFWKEIQDVTIISACAPPGGGRNPVTPRFIRHFSMLCLPMPSEHSLKQIFQAILNGFLSDFPPAVKQTASSIVEASVEIYNKMSVDLLPTPAKSHYVFNLRDLSKCVQGILQCDPGTIREEIQIFRLFCHECQRVFHDRLINNEDKHYFHVILTEMANKHFGIAIDLEYFLNKPIIFGDFIKFGADKADRIYDDMPDIEKTANVLQDYLDDYNLTNPKEVKLVFFQDAIEHVSRIARMIRQERGNALLVGVGGTGKQSLTRLAAHICGYKCLQIELSRGYNYDSFHEDLRKLYKMAGVEDKNMVFLFTDTQIVVEEFLEDINNILNSGEVPNLFEKDELEQVLAATRPRAKEVGISEGNRDEVFQYFISKVRQKLHIVLCMSPVGEAFRSRCRMFPSLVNCCTIDWFVQWPREALLSVSKTFFSQVDAGNEELKEKLPLMCVNVHLSVSSMAERYYNELRRRYYTTPTSYLELINLYLSMLSEKRKQIISARDRVKNGLTKLLETNILVDKMKLDLSALEPVLLAKSEDVEALMEKLAVDQESADQVRNTVQEDEATAKVKAEETQAIADDAQRDLDEALPALDAANKALDSLDKADISEIRVFTKPPDLVMTVMEAISILLNAKPDWPSAKQLLGDSNFLKRLLEYDKENIKPQILAKLQKYINNPDFVPEKVEKVSKACKSMCMWVRAMDLYSRVVKVVEPKRQKLRAAQAELDITMATLREKQALLRQVEDQIQALQDEYDKGVNEKESLAKTMALTKARLVRAGKLTAALEDEQVRWEESIQKFEEEISNITGNVFIAAACVAYYGAFTAQYRQSLIECWIQDCQSLEIPIDPSFSLINILGDPYEIRQWNTDGLPRDLISTENGILVTQGRRWPLMIDPQDQANRWIRNKESKSGLKIIKLTDSNFLRILENSIRLGLPVLLEELKETLDPALEPILLKQIFISGGRLLIRLGDSDIDYDKNFRFYMTTKMPNPHYLPEVCIKVTIINFTVTKSGLEDQLLSDVVRLEKPRLEEQRIKLIVRINTDKNQLKTIEEKILRMLFTSEGNILDNEELIDTLQDSKITSGAIKTRLEEAESTEQMINVAREKYRPVATQGSVMYFVIASLSEIDPMYQYSLKYFKQLFNTTIETSVKTENLQQRLDVLLEQTLLTAYVNVSRGLFEQHKLIYSFMLCVEMMRQQGTLSDAEWNFFLRGSAGLEKERPPKPEAPWLPTATWFACCDLEESFPVFHGLTQNILSHPISIRLGSFETYINPQKWEGYSKMKHEDKHMRQEKEAAHQDPWSAGLSSFHKLILIKCCKEEKVVFALTDFVIENLGKQFIETPPVDLPTLYQDMSCNTPLVFILSTGSDPMGAFQRFARESGYSERVQSISLGQGQGPIAEKMVKDAMKSGNWVFLQNCHLAVSWMLAMEELIKTFTDPDSAIKDTFRLFLSSMPSNTFPVTVLQNSVKVTNEPPKGLRANIRRAFTEMTPSFFEENILGKKWRQIIFGICFFHAIIQERKKFGPLGWNICYEFNDSDRECALLNLKLYCKEGKIPWDALIYITGEITYGGRVTDSWDQRCLRTILKRFFSPETLEEDYKYSESGIYFAPMADSLQEFKDYIENLPLIDDPEIFGMHENANLVFQYKETSTLINTILEVQPRSSTGGEGKSNDEIVQELVASVQTRVPEKLEMEGASESLFVKDLQGRLNSLTTVLGQEVDRFNNLLKLIHTSLETLNKAIAGFVVMSEEMEKVYNSFLNNQVPALWSNTAYPSLKPLGSWVKDLILRTSFVDLWLKRGQPKSYWISGFFFPQGFLTGTLQNHARKYNLPIDELSFKYSVIPTYRDQAAVIEAAKTVQFGQELPMDMELPSPEDGVLVHGMFMDASRWDDKEMVIEDALPGQMNPVLPVVHFEPQQNYKPSPTLYHCPLYKTGARAGTLSTTGHSTNFVVTVLLPSKRSKDYWIAKGSALLCQLSE.

Positions methionine 1 to threonine 1433 are stem. Isoleucine 192–leucine 199 serves as a coordination point for ATP. The stretch at cysteine 805–alanine 859 forms a coiled coil. AAA stretches follow at residues tyrosine 1434–methionine 1655, serine 1715–serine 1948, lysine 2058–glycine 2306, and aspartate 2408–arginine 2659. ATP is bound by residues glycine 1472 to threonine 1479, glycine 1753 to threonine 1760, glycine 2096 to serine 2103, and glycine 2447 to glutamine 2454. Residues serine 2676–leucine 2961 form a stalk region. Positions lysine 2901–valine 2996 form a coiled coil. 2 AAA regions span residues leucine 3042–threonine 3272 and leucine 3509–leucine 3730.

Belongs to the dynein heavy chain family. As to quaternary structure, the dynein complex consists of at least two heavy chains and a number of intermediate and light chains. In terms of tissue distribution, expressed in several tissues, including brain, pituitary, testis and trachea, with highest levels in testis.

The protein resides in the cytoplasm. It is found in the cytoskeleton. The protein localises to the cilium axoneme. Force generating protein of respiratory cilia. Produces force towards the minus ends of microtubules. Dynein has ATPase activity; the force-producing power stroke is thought to occur on release of ADP. This is Dynein axonemal heavy chain 6 from Homo sapiens (Human).